A 962-amino-acid polypeptide reads, in one-letter code: MLVVLLILHAVSCAHSHGSPGAAVPVKQCPSACQCEEDGILLLVDCSEQGLSSVPTDLSPLTSYLDLSMNNISEIQPNAFRNLHFLSELRLSGNHLRHIPGPMLQGLYNLKVLMLQNNQLERLPSEDPWELPNLLSLRLDANLIMEVPARTLSGMRSLRHLWLDDNALTEIPVSALNDLSSLQAMTLALNRITLIPDYAFRNLSNLVVLHLHNNMIRTLGQNCFEGLHSLETLELNFNDLQEFPVAIRTLAKLQELGFHNNNIKAIPERAFVGNPLLQTIHFYENPIQFVGRSAFQFLPKLHTLSLNGATEIREFPDLKGTTSLQVLTLTRAGLTSLPYDLCHLLPKLKVLELSHNVIEELPSFYHCTSLQEIGLQHNLIKQIEMNTFQQLGSLRSLDLSWNSINSIHPDAFFSLQSLIKLDLTGNRLSNLPMTGLTSLTHLKLKGNMALSRSFGLEDFPNIRVIEMPYAYQCCVFGGCSSYRSASQWEEQMGSEEEDFQKKSPSLFPIHTDNNYDLDLEEFQLAIEESKLQTSIQCTPIPGPFKPCDNLFDSWVVRLGMWLISLVSLMGNSLLILTVFTSPSYLSPVKFIIGTISGANLLTGLCTGTLALVDARTFGEFALHGAQWEMGAGCRAVGFLSVLASEGSILFLTLAAVQCSVSVSCARAYGKSPSLGSVRAAAVACLALSLAVAALPLIGVGEYGATPLCMPSPLPDGEPSTLGFMVALIMMNSLCFLVITGTYIKLYWDLMKGDFDSIWDCAMIKHVAWLIFTNCLLYCPVAFLTFSSLLSLFPVSEEVVKSVVLVLLPLPASINPLLYLLFNPHFREDMRLLLSRAHLNHDRNLDSFVSVDTEKSSYDSTQALVSFATEADGVFESLSVPNPETVARFTCPPSVALIPCQMQMKPSTDRENTGENLIRSAPGLIAKEQEHIRSSGVDTQNGTSIFSGAYHSTGPSAHSQVFT.

A signal peptide spans 1–16 (MLVVLLILHAVSCAHS). Positions 20-60 (PGAAVPVKQCPSACQCEEDGILLLVDCSEQGLSSVPTDLSP) constitute an LRRNT domain. LRR repeat units follow at residues 38-58 (DGILLLVDCSEQGLSSVPTDL), 59-82 (SPLTSYLDLSMNNISEIQPNAFRN), 83-106 (LHFLSELRLSGNHLRHIPGPMLQG), 107-131 (LYNLKVLMLQNNQLERLPSEDPWEL), 133-154 (NLLSLRLDANLIMEVPARTLSG), 155-178 (MRSLRHLWLDDNALTEIPVSALND), 179-202 (LSSLQAMTLALNRITLIPDYAFRN), 203-226 (LSNLVVLHLHNNMIRTLGQNCFEG), 228-250 (HSLETLELNFNDLQEFPVAIRTL), 251-273 (AKLQELGFHNNNIKAIPERAFVG), 275-297 (PLLQTIHFYENPIQFVGRSAFQF), 298-321 (LPKLHTLSLNGATEIREFPDLKGT), 322-344 (TSLQVLTLTRAGLTSLPYDLCHL), 345-368 (LPKLKVLELSHNVIEELPSFYHCT), 370-390 (LQEIGLQHNLIKQIEMNTFQQ), 391-414 (LGSLRSLDLSWNSINSIHPDAFFS), and 416-438 (QSLIKLDLTGNRLSNLPMTGLTS). Asparagine 71 carries an N-linked (GlcNAc...) asparagine glycan. Asparagine 202 is a glycosylation site (N-linked (GlcNAc...) asparagine). 7 helical membrane passes run 559 to 579 (GMWLISLVSLMGNSLLILTVF), 590 to 610 (FIIGTISGANLLTGLCTGTLA), 647 to 669 (SILFLTLAAVQCSVSVSCARAYG), 679 to 699 (AAAVACLALSLAVAALPLIGV), 723 to 743 (FMVALIMMNSLCFLVITGTYI), 766 to 786 (VAWLIFTNCLLYCPVAFLTFS), and 801 to 821 (SVVLVLLPLPASINPLLYLLF). A disulfide bridge links cysteine 633 with cysteine 708.

The protein belongs to the G-protein coupled receptor 1 family.

It localises to the cell membrane. Its function is as follows. Receptor for R-spondins that potentiates the canonical Wnt signaling pathway. Upon binding to R-spondins (rspo1, rspo2, rspo3 or rspo4), associates with phosphorylated lrp6 and frizzled receptors that are activated by extracellular Wnt receptors, triggering the canonical Wnt signaling pathway to increase expression of target genes. In contrast to classical G-protein coupled receptors, does not activate heterotrimeric G-proteins to transduce the signal. In Danio rerio (Zebrafish), this protein is Leucine-rich repeat-containing G-protein coupled receptor 6 (lgr6).